The following is a 483-amino-acid chain: ATP synthase subunit beta (483 aa).

169 to 176 is an ATP binding site; the sequence is GGAGVGKT.

This sequence belongs to the ATPase alpha/beta chains family. In terms of assembly, F-type ATPases have 2 components, CF(1) - the catalytic core - and CF(0) - the membrane proton channel. CF(1) has five subunits: alpha(3), beta(3), gamma(1), delta(1), epsilon(1). CF(0) has three main subunits: a(1), b(2) and c(9-12). The alpha and beta chains form an alternating ring which encloses part of the gamma chain. CF(1) is attached to CF(0) by a central stalk formed by the gamma and epsilon chains, while a peripheral stalk is formed by the delta and b chains.

Its subcellular location is the cell membrane. It catalyses the reaction ATP + H2O + 4 H(+)(in) = ADP + phosphate + 5 H(+)(out). Produces ATP from ADP in the presence of a proton gradient across the membrane. The catalytic sites are hosted primarily by the beta subunits. In Rhodococcus erythropolis (strain PR4 / NBRC 100887), this protein is ATP synthase subunit beta.